The following is a 350-amino-acid chain: Nuclear pore complex-interacting protein family member A1 (350 aa).

The interval Lys-306–Asp-325 is disordered.

It belongs to the NPIP family. As to quaternary structure, may associate with the nuclear pore complex. As to expression, widely expressed.

It localises to the nucleus. The protein resides in the nuclear pore complex. It is found in the nucleus membrane. This Homo sapiens (Human) protein is Nuclear pore complex-interacting protein family member A1 (NPIPA1).